A 490-amino-acid polypeptide reads, in one-letter code: 7-ethoxycoumarin O-deethylase (490 aa).

Residue Cys-432 coordinates heme.

This sequence belongs to the cytochrome P450 family. The cofactor is heme.

Its function is as follows. Capable of dealkylating a model xenobiotic compound, 7-ethoxycoumarin. Metabolizes with high efficiency a wide range of xenobiotics, including alkoxycoumarins, alkoxyresorufins, and several herbicides of the class of phenylureas. Catalyzes the double N-dealkylation (oxidative N-demethylation) of phenylureas such as chlortoluron and isoproturon with turnover rates comparable to those reported for physiological substrates and produces non-phytotoxic compounds. Could be used for control of herbicide tolerance and selectivity, as well as soil and groundwater bioremediation. The protein is 7-ethoxycoumarin O-deethylase (CYP76B1) of Helianthus tuberosus (Jerusalem artichoke).